The chain runs to 423 residues: Lipoamide acyltransferase component of branched-chain alpha-keto acid dehydrogenase complex (423 aa).

The Lipoyl-binding domain occupies 3-78 (THVIKMPDIG…AVGSELIRIE (76 aa)). Residue Lys-44 is modified to N6-lipoyllysine. Positions 137-174 (LASPAVRKRALDAGIELRYVHGSGPAGRILHEDLDAFM) constitute a Peripheral subunit-binding (PSBD) domain. Catalysis depends on residues His-395 and Asp-399.

The protein belongs to the 2-oxoacid dehydrogenase family. In terms of assembly, forms a 24-polypeptide structural core with octahedral symmetry. (R)-lipoate serves as cofactor.

It carries out the reaction N(6)-[(R)-dihydrolipoyl]-L-lysyl-[protein] + 2-methylpropanoyl-CoA = N(6)-[(R)-S(8)-2-methylpropanoyldihydrolipoyl]-L-lysyl-[protein] + CoA. Functionally, the branched-chain alpha-keto dehydrogenase complex catalyzes the overall conversion of alpha-keto acids to acyl-CoA and CO(2). It contains multiple copies of three enzymatic components: branched-chain alpha-keto acid decarboxylase (E1), lipoamide acyltransferase (E2) and lipoamide dehydrogenase (E3). In Pseudomonas putida (Arthrobacter siderocapsulatus), this protein is Lipoamide acyltransferase component of branched-chain alpha-keto acid dehydrogenase complex (bkdB).